The following is a 432-amino-acid chain: tRNA(Ile)-lysidine synthase (432 aa).

An ATP-binding site is contributed by 19–24 (STGIDS).

Belongs to the tRNA(Ile)-lysidine synthase family.

It localises to the cytoplasm. The enzyme catalyses cytidine(34) in tRNA(Ile2) + L-lysine + ATP = lysidine(34) in tRNA(Ile2) + AMP + diphosphate + H(+). Functionally, ligates lysine onto the cytidine present at position 34 of the AUA codon-specific tRNA(Ile) that contains the anticodon CAU, in an ATP-dependent manner. Cytidine is converted to lysidine, thus changing the amino acid specificity of the tRNA from methionine to isoleucine. In Staphylococcus epidermidis (strain ATCC 35984 / DSM 28319 / BCRC 17069 / CCUG 31568 / BM 3577 / RP62A), this protein is tRNA(Ile)-lysidine synthase.